A 380-amino-acid chain; its full sequence is Anhydro-N-acetylmuramic acid kinase (380 aa).

Residue 9–16 (GTSVDGID) coordinates ATP.

Belongs to the anhydro-N-acetylmuramic acid kinase family.

It catalyses the reaction 1,6-anhydro-N-acetyl-beta-muramate + ATP + H2O = N-acetyl-D-muramate 6-phosphate + ADP + H(+). It functions in the pathway amino-sugar metabolism; 1,6-anhydro-N-acetylmuramate degradation. It participates in cell wall biogenesis; peptidoglycan recycling. Its function is as follows. Catalyzes the specific phosphorylation of 1,6-anhydro-N-acetylmuramic acid (anhMurNAc) with the simultaneous cleavage of the 1,6-anhydro ring, generating MurNAc-6-P. Is required for the utilization of anhMurNAc either imported from the medium or derived from its own cell wall murein, and thus plays a role in cell wall recycling. This is Anhydro-N-acetylmuramic acid kinase from Cyanothece sp. (strain PCC 7425 / ATCC 29141).